Consider the following 1403-residue polypeptide: Mannuronan C5-epimerase AlgE1 (1403 aa).

7 PbH1 repeats span residues 133–155 (DRDVTLERVEIREMSGYGFDPHE), 157–179 (TINLTIRDSVAHDNSLDGFVADY), 180–202 (QVGGVFENNVSYNNDRHGFNIVT), 204–226 (TNDFVLSNNVAYGNGGAGLVVQR), 257–279 (AHDVTLQNAEIYGNGLYGVRVYG), 280–302 (AQDVQILDNQIHDNSQNGAYAEV), and 320–359 (TTGTWLEGNVISGSANSTYGIQERADGTDYSSLYANSIDG). 2 disordered regions span residues 372-395 (STVSSQSGSGQQATLEGSAGNDAL) and 408-428 (AGDDRLNGDAGNDILDGGAGR). Hemolysin-type calcium-binding repeat units follow at residues 388-403 (GSAGNDALSGTEAHET), 406-422 (GQAGDDRLNGDAGNDIL), 424-440 (GGAGRDNLTGGAGADTF), 557-573 (GYGGNDTLNGGAGDDIL), 574-591 (VGGAGRDSLTGGAGADVF), 697-712 (EGTDGNDTLQGTEANE), 716-732 (GLDGRDNLNGGAGDDIL), and 734-750 (GGAGRDTLTGGTGADTF). PbH1 repeat units follow at residues 977–999 (DRNVTIERVEIREMSGYGFDPHE), 1001–1023 (TINLTIRDSVAHDNGLDGFVADY), 1024–1046 (LVDSVFENNVAYNNDRHGFNIVT), 1048–1070 (TYDFVMTNNVAYGNGGAGLTIQR), 1101–1123 (TNNVTLQNAEIYGNGSSGVRLYG), 1124–1146 (TEDVQILDNQIHDNSQNGTYPEV), 1163–1185 (TLNTRIEGNLIDASDNANYAVRE), and 1190–1212 (SDYTTLVDNDISGGQVASVQLSG). Hemolysin-type calcium-binding repeat units lie at residues 1227 to 1243 (GTDGNDVLVGSDANDQL), 1244 to 1261 (YGGAGDDRLDGGAGDDLL), and 1263 to 1279 (GGAGRDDLTGGTGADTF).

Belongs to the D-mannuronate C5-epimerase family. The cofactor is Ca(2+).

The protein localises to the secreted. The catalysed reaction is [(1-&gt;4)-beta-D-mannuronosyl](n) = [alginate](n). Its pathway is glycan biosynthesis; alginate biosynthesis. Its activity is regulated as follows. Inhibited by zinc. Functionally, converts beta-D-mannuronic acid (M) to alpha-L-guluronic acid (G), producing a polymer with gel-forming capacity, required for the formation of the cyst coat. This Azotobacter vinelandii protein is Mannuronan C5-epimerase AlgE1.